Reading from the N-terminus, the 502-residue chain is ATP synthase subunit alpha (502 aa).

Position 169–176 (169–176 (GDRQTGKT)) interacts with ATP.

The protein belongs to the ATPase alpha/beta chains family. F-type ATPases have 2 components, CF(1) - the catalytic core - and CF(0) - the membrane proton channel. CF(1) has five subunits: alpha(3), beta(3), gamma(1), delta(1), epsilon(1). CF(0) has three main subunits: a(1), b(2) and c(9-12). The alpha and beta chains form an alternating ring which encloses part of the gamma chain. CF(1) is attached to CF(0) by a central stalk formed by the gamma and epsilon chains, while a peripheral stalk is formed by the delta and b chains.

The protein localises to the cell inner membrane. It catalyses the reaction ATP + H2O + 4 H(+)(in) = ADP + phosphate + 5 H(+)(out). In terms of biological role, produces ATP from ADP in the presence of a proton gradient across the membrane. The alpha chain is a regulatory subunit. The sequence is that of ATP synthase subunit alpha from Pelobacter propionicus (strain DSM 2379 / NBRC 103807 / OttBd1).